A 270-amino-acid polypeptide reads, in one-letter code: 3-methyl-2-oxobutanoate hydroxymethyltransferase (270 aa).

Mg(2+) is bound by residues Asp41 and Asp80. 3-methyl-2-oxobutanoate is bound by residues 41–42 (DS), Asp80, and Lys109. Glu111 contacts Mg(2+). Glu178 (proton acceptor) is an active-site residue.

Belongs to the PanB family. Homodecamer; pentamer of dimers. Requires Mg(2+) as cofactor.

The protein localises to the cytoplasm. It carries out the reaction 3-methyl-2-oxobutanoate + (6R)-5,10-methylene-5,6,7,8-tetrahydrofolate + H2O = 2-dehydropantoate + (6S)-5,6,7,8-tetrahydrofolate. Its pathway is cofactor biosynthesis; (R)-pantothenate biosynthesis; (R)-pantoate from 3-methyl-2-oxobutanoate: step 1/2. In terms of biological role, catalyzes the reversible reaction in which hydroxymethyl group from 5,10-methylenetetrahydrofolate is transferred onto alpha-ketoisovalerate to form ketopantoate. The sequence is that of 3-methyl-2-oxobutanoate hydroxymethyltransferase from Thermotoga neapolitana (strain ATCC 49049 / DSM 4359 / NBRC 107923 / NS-E).